Here is a 2111-residue protein sequence, read N- to C-terminus: Fatty acid synthase beta subunit aflB (2111 aa).

Positions 200-565 are acetyltransferase (AT) domain; sequence IVTVFNGQGV…KAGTAARVIL (366 aa). The enoyl reductase (ER) domain stretch occupies residues 618-863; sequence SRALGLPPVM…AIVDTPGVPD (246 aa). The segment at 1195–1688 is dehydratase (DH) domain; the sequence is GTKPSWRKAL…SPGETLLVDI (494 aa). One can recognise a MaoC-like domain in the interval 1606–1708; the sequence is EMPTSSDQYA…IVVATARSES (103 aa). A malonyl/palmitoyl transferase (MT/PT) domain region spans residues 1727–2091; the sequence is YLFTGQGSQK…FENVLAISES (365 aa).

This sequence belongs to the fungal fatty acid synthetase subunit beta family. In terms of assembly, [Alpha(6)beta(6)] hexamers of two multifunctional subunits (alpha and beta).

The enzyme catalyses acetyl-CoA + n malonyl-CoA + 2n NADPH + 4n H(+) = a long-chain-acyl-CoA + n CoA + n CO2 + 2n NADP(+).. It carries out the reaction holo-[ACP] + acetyl-CoA = acetyl-[ACP] + CoA. It catalyses the reaction holo-[ACP] + malonyl-CoA = malonyl-[ACP] + CoA. The catalysed reaction is a (3R)-hydroxyacyl-[ACP] = a (2E)-enoyl-[ACP] + H2O. The enzyme catalyses a 2,3-saturated acyl-[ACP] + NAD(+) = a (2E)-enoyl-[ACP] + NADH + H(+). It carries out the reaction (9Z)-octadecenoyl-[ACP] + H2O = (9Z)-octadecenoate + holo-[ACP] + H(+). It participates in secondary metabolite biosynthesis. Its function is as follows. Fatty acid synthase beta subunit; part of the gene cluster that mediates the biosynthesis of aspercryptins, linear lipopeptides built from six amino acids including 2 highly unusual and nonproteogenic amino acids, 2-amino-octanoic acid (2aoa) and 2-amino-dodecanol (2adol). The core structure of aspercryptins is as follows: Ser/Ala-Thr-Ile/Val-2aoa-Asn-2adol. The first step of aspercryptin biosynthesis is the generation of the fatty acid precursors, octanoic and dodecanoic acids, by the FAS subunits atnF and atnM. The fatty acid precursors are likely transformed into the corresponding alpha-amino fatty acids in three steps. First, they are hydroxylated by the cytochrome P450 monooxygenase atnE, then oxidized to the corresponding alpha-keto acids by the NAD(P)-dependent oxidoreductase atnD, and finally converted to the alpha-amino fatty acids by the PLP-dependent aminotransferases atnH or atnJ. the alpha-amino fatty acids, 2-amino-octanoic and 2-amino-dodecanoic acids, are recognized, activated, and covalently tethered to the NRPS atnA by its fourth and sixth adenylation domains. The second module of atnA is the Thr module and contains an epimerase (E) domain responsible for the epimerization of Thr to D-allo-Thr. Additionally, despite atnA having only one epimerase domain, the first amino acid of aspercryptin A1 is D-Ser, suggesting that serine is either loaded directly as D-Ser on the first module or that the epimerase domain in the threonine module epimerizes both L-Ser and L-Thr. After condensation of the hexapeptide of aspercryptin, the C-terminal reductase (TE) domain might be involved in the reductive release and production of the aldehyde hexapeptide. Further reduction would generate aspercryptins. The variety of aspercryptins produced reflects the flexibility of the atnA NRPS, allowing incorporation of alanine instead of serine, valine for isoleucine, and a C10 fatty amino alcohol instead of the C12 version. AtnB seems to be involved in the selectivity for Ile versus Val by the third module. Moreover, type B, C and D aspercryptins have an additional N-terminal cichorine, acetyl and propionyl group respectively. The polypeptide is Fatty acid synthase beta subunit aflB (Emericella nidulans (strain FGSC A4 / ATCC 38163 / CBS 112.46 / NRRL 194 / M139) (Aspergillus nidulans)).